An 819-amino-acid polypeptide reads, in one-letter code: DNA topoisomerase 4 subunit A (819 aa).

One can recognise a Topo IIA-type catalytic domain in the interval 30–496; it reads LPDIRDGLKP…QIIEIDTASL (467 aa). Residue Tyr118 is the O-(5'-phospho-DNA)-tyrosine intermediate of the active site.

It belongs to the type II topoisomerase GyrA/ParC subunit family. ParC type 2 subfamily. As to quaternary structure, heterotetramer composed of ParC and ParE.

It localises to the cell membrane. The enzyme catalyses ATP-dependent breakage, passage and rejoining of double-stranded DNA.. Its function is as follows. Topoisomerase IV is essential for chromosome segregation. It relaxes supercoiled DNA. Performs the decatenation events required during the replication of a circular DNA molecule. This is DNA topoisomerase 4 subunit A from Streptococcus pyogenes serotype M3 (strain SSI-1).